A 238-amino-acid chain; its full sequence is MNFQSSSSGSIVAIVPAAGIGSRMGATIPKQYLPLLDKPILAHTLQRLLSHPAIDKVIVAVSAEDSWFDSLAEARDPKLTRVLGGKERADSVLAALSALPDSCDAWALVHDAARPCLTHGDIDALLASRLTYPQGAILAMPVRDTMKRAATDGSIETTVCREALWHALTPQLFPAERLKQHLEQALAAGVSITDEASAMEWAGVYPGLVSGRADNIKVTHPDDLQLAGLFLQAQQQHT.

This sequence belongs to the IspD/TarI cytidylyltransferase family. IspD subfamily.

It carries out the reaction 2-C-methyl-D-erythritol 4-phosphate + CTP + H(+) = 4-CDP-2-C-methyl-D-erythritol + diphosphate. It participates in isoprenoid biosynthesis; isopentenyl diphosphate biosynthesis via DXP pathway; isopentenyl diphosphate from 1-deoxy-D-xylulose 5-phosphate: step 2/6. Catalyzes the formation of 4-diphosphocytidyl-2-C-methyl-D-erythritol from CTP and 2-C-methyl-D-erythritol 4-phosphate (MEP). This chain is 2-C-methyl-D-erythritol 4-phosphate cytidylyltransferase, found in Shewanella amazonensis (strain ATCC BAA-1098 / SB2B).